A 256-amino-acid chain; its full sequence is Probable fructose-2,6-bisphosphatase TIGAR A (256 aa).

His11 serves as the catalytic Tele-phosphohistidine intermediate. The Proton donor/acceptor role is filled by Glu89. The segment at 147–170 (HQDKVQDGGTSSADESTEAPAGLA) is disordered.

This sequence belongs to the phosphoglycerate mutase family.

Its subcellular location is the cytoplasm. The protein resides in the nucleus. It is found in the mitochondrion. It catalyses the reaction beta-D-fructose 2,6-bisphosphate + H2O = beta-D-fructose 6-phosphate + phosphate. In terms of biological role, fructose-bisphosphatase hydrolyzing fructose-2,6-bisphosphate as well as fructose-1,6-bisphosphate. Acts as a negative regulator of glycolysis by lowering intracellular levels of fructose-2,6-bisphosphate in a p53/TP53-dependent manner, resulting in the pentose phosphate pathway (PPP) activation and NADPH production. Contributes to the generation of reduced glutathione to cause a decrease in intracellular reactive oxygen species (ROS) content, correlating with its ability to protect cells from oxidative or metabolic stress-induced cell death. May play a role in mitophagy inhibition. This is Probable fructose-2,6-bisphosphatase TIGAR A from Danio rerio (Zebrafish).